Reading from the N-terminus, the 371-residue chain is Putative agmatine deiminase (371 aa).

The active-site Amidino-cysteine intermediate is the Cys-361.

Belongs to the agmatine deiminase family.

The catalysed reaction is agmatine + H2O = N-carbamoylputrescine + NH4(+). The protein is Putative agmatine deiminase of Selenomonas ruminantium.